Consider the following 302-residue polypeptide: Probable protein ABIL4 (302 aa).

Disordered stretches follow at residues 151–179 (PSTG…YPSA) and 220–256 (LLGK…QPGF). A compositionally biased stretch (polar residues) spans 161–170 (ARLQTDNGQD).

It belongs to the ABI family. In terms of assembly, binds SCAR.

It localises to the cytoplasm. The protein localises to the cytoskeleton. In terms of biological role, involved in regulation of actin and microtubule organization. Part of a WAVE complex that activates the Arp2/3 complex. The protein is Probable protein ABIL4 of Oryza sativa subsp. japonica (Rice).